The following is a 90-amino-acid chain: Probable Fe(2+)-trafficking protein (90 aa).

The protein belongs to the Fe(2+)-trafficking protein family.

Functionally, could be a mediator in iron transactions between iron acquisition and iron-requiring processes, such as synthesis and/or repair of Fe-S clusters in biosynthetic enzymes. The protein is Probable Fe(2+)-trafficking protein of Vibrio parahaemolyticus serotype O3:K6 (strain RIMD 2210633).